Consider the following 229-residue polypeptide: Ribonuclease 3 (229 aa).

The 126-residue stretch at 7–132 (ISAFCDRIGH…VIAAVYRDAG (126 aa)) folds into the RNase III domain. Residue glutamate 45 coordinates Mg(2+). Residue aspartate 49 is part of the active site. 2 residues coordinate Mg(2+): aspartate 118 and glutamate 121. Residue glutamate 121 is part of the active site. Residues 157–226 (DPKTALQEWA…AKALLAQVES (70 aa)) form the DRBM domain.

The protein belongs to the ribonuclease III family. As to quaternary structure, homodimer. Mg(2+) is required as a cofactor.

It localises to the cytoplasm. It carries out the reaction Endonucleolytic cleavage to 5'-phosphomonoester.. Its function is as follows. Digests double-stranded RNA. Involved in the processing of primary rRNA transcript to yield the immediate precursors to the large and small rRNAs (23S and 16S). Processes some mRNAs, and tRNAs when they are encoded in the rRNA operon. Processes pre-crRNA and tracrRNA of type II CRISPR loci if present in the organism. This is Ribonuclease 3 from Dinoroseobacter shibae (strain DSM 16493 / NCIMB 14021 / DFL 12).